The chain runs to 149 residues: Nucleoside diphosphate kinase 1 (149 aa).

Positions 9, 57, 85, 91, 102, and 112 each coordinate ATP. His-115 (pros-phosphohistidine intermediate) is an active-site residue.

Homohexamer. Requires Mg(2+) as cofactor.

It catalyses the reaction a 2'-deoxyribonucleoside 5'-diphosphate + ATP = a 2'-deoxyribonucleoside 5'-triphosphate + ADP. The enzyme catalyses a ribonucleoside 5'-diphosphate + ATP = a ribonucleoside 5'-triphosphate + ADP. Its function is as follows. Major role in the synthesis of nucleoside triphosphates other than ATP. The ATP gamma phosphate is transferred to the NDP beta phosphate via a ping-pong mechanism, using a phosphorylated active-site intermediate. This NDK is microtubule-associated. This Oryza sativa subsp. indica (Rice) protein is Nucleoside diphosphate kinase 1 (NDKR).